The chain runs to 262 residues: uncharacterized protein (262 aa).

A BTB domain is found at 5 to 107 (PLISLDVEGV…MIEHKLRTFC (103 aa)). The 14-residue stretch at 182–195 (ISLPRNFTHIAHVG) folds into the CRIB domain.

This is an uncharacterized protein from Caenorhabditis elegans.